Here is a 157-residue protein sequence, read N- to C-terminus: Pyruvoyl-dependent arginine decarboxylase 2 (157 aa).

Position 43 is a pyruvic acid (Ser) (S43).

Belongs to the PdaD family. Requires pyruvate as cofactor.

It catalyses the reaction L-arginine + H(+) = agmatine + CO2. This Archaeoglobus fulgidus (strain ATCC 49558 / DSM 4304 / JCM 9628 / NBRC 100126 / VC-16) protein is Pyruvoyl-dependent arginine decarboxylase 2 (pdaD2).